The chain runs to 895 residues: Isoleucine--tRNA ligase (895 aa).

The 'HIGH' region signature appears at 57–67; it reads PYANGSIHVGH. Residue glutamate 549 participates in L-isoleucyl-5'-AMP binding. Residues 590 to 594 carry the 'KMSKS' region motif; the sequence is KMSKS. Lysine 593 contacts ATP. The Zn(2+) site is built by cysteine 869, cysteine 872, cysteine 888, and cysteine 891.

It belongs to the class-I aminoacyl-tRNA synthetase family. IleS type 1 subfamily. As to quaternary structure, monomer. Requires Zn(2+) as cofactor.

It is found in the cytoplasm. The enzyme catalyses tRNA(Ile) + L-isoleucine + ATP = L-isoleucyl-tRNA(Ile) + AMP + diphosphate. Its function is as follows. Catalyzes the attachment of isoleucine to tRNA(Ile). As IleRS can inadvertently accommodate and process structurally similar amino acids such as valine, to avoid such errors it has two additional distinct tRNA(Ile)-dependent editing activities. One activity is designated as 'pretransfer' editing and involves the hydrolysis of activated Val-AMP. The other activity is designated 'posttransfer' editing and involves deacylation of mischarged Val-tRNA(Ile). The chain is Isoleucine--tRNA ligase from Mycoplasma genitalium (strain ATCC 33530 / DSM 19775 / NCTC 10195 / G37) (Mycoplasmoides genitalium).